The chain runs to 197 residues: Imidazoleglycerol-phosphate dehydratase (197 aa).

Belongs to the imidazoleglycerol-phosphate dehydratase family.

It localises to the cytoplasm. The catalysed reaction is D-erythro-1-(imidazol-4-yl)glycerol 3-phosphate = 3-(imidazol-4-yl)-2-oxopropyl phosphate + H2O. It participates in amino-acid biosynthesis; L-histidine biosynthesis; L-histidine from 5-phospho-alpha-D-ribose 1-diphosphate: step 6/9. The protein is Imidazoleglycerol-phosphate dehydratase of Pseudomonas aeruginosa (strain LESB58).